Here is a 145-residue protein sequence, read N- to C-terminus: Large ribosomal subunit protein uL15 (145 aa).

Basic and acidic residues predominate over residues 1–13 (MNLHELKYNEGAR). Residues 1 to 56 (MNLHELKYNEGARKEKHRVGRGHAAGKGKQAGKGQSGQLKRTGSKPGFEGGQNPWY) form a disordered region. Residues 14–26 (KEKHRVGRGHAAG) are compositionally biased toward basic residues.

It belongs to the universal ribosomal protein uL15 family. In terms of assembly, part of the 50S ribosomal subunit.

Functionally, binds to the 23S rRNA. The polypeptide is Large ribosomal subunit protein uL15 (Mycoplasma mobile (strain ATCC 43663 / 163K / NCTC 11711) (Mesomycoplasma mobile)).